The primary structure comprises 104 residues: Large ribosomal subunit protein uL23 (104 aa).

The protein belongs to the universal ribosomal protein uL23 family. In terms of assembly, part of the 50S ribosomal subunit. Contacts protein L29, and trigger factor when it is bound to the ribosome.

Its function is as follows. One of the early assembly proteins it binds 23S rRNA. One of the proteins that surrounds the polypeptide exit tunnel on the outside of the ribosome. Forms the main docking site for trigger factor binding to the ribosome. The protein is Large ribosomal subunit protein uL23 of Polynucleobacter asymbioticus (strain DSM 18221 / CIP 109841 / QLW-P1DMWA-1) (Polynucleobacter necessarius subsp. asymbioticus).